The primary structure comprises 152 residues: 6,7-dimethyl-8-ribityllumazine synthase (152 aa).

Residues F22, 54–56 (AFE), and 78–80 (AVI) contribute to the 5-amino-6-(D-ribitylamino)uracil site. Position 83 to 84 (83 to 84 (ET)) interacts with (2S)-2-hydroxy-3-oxobutyl phosphate. Residue H86 is the Proton donor of the active site. F111 contributes to the 5-amino-6-(D-ribitylamino)uracil binding site. Position 125 (R125) interacts with (2S)-2-hydroxy-3-oxobutyl phosphate.

It belongs to the DMRL synthase family.

The enzyme catalyses (2S)-2-hydroxy-3-oxobutyl phosphate + 5-amino-6-(D-ribitylamino)uracil = 6,7-dimethyl-8-(1-D-ribityl)lumazine + phosphate + 2 H2O + H(+). The protein operates within cofactor biosynthesis; riboflavin biosynthesis; riboflavin from 2-hydroxy-3-oxobutyl phosphate and 5-amino-6-(D-ribitylamino)uracil: step 1/2. In terms of biological role, catalyzes the formation of 6,7-dimethyl-8-ribityllumazine by condensation of 5-amino-6-(D-ribitylamino)uracil with 3,4-dihydroxy-2-butanone 4-phosphate. This is the penultimate step in the biosynthesis of riboflavin. The protein is 6,7-dimethyl-8-ribityllumazine synthase of Limosilactobacillus reuteri (strain DSM 20016) (Lactobacillus reuteri).